Consider the following 188-residue polypeptide: Peptidyl-tRNA hydrolase (188 aa).

Tyrosine 15 provides a ligand contact to tRNA. Histidine 20 functions as the Proton acceptor in the catalytic mechanism. TRNA contacts are provided by phenylalanine 63, asparagine 65, and asparagine 111.

It belongs to the PTH family. In terms of assembly, monomer.

It localises to the cytoplasm. The catalysed reaction is an N-acyl-L-alpha-aminoacyl-tRNA + H2O = an N-acyl-L-amino acid + a tRNA + H(+). Its function is as follows. Hydrolyzes ribosome-free peptidyl-tRNAs (with 1 or more amino acids incorporated), which drop off the ribosome during protein synthesis, or as a result of ribosome stalling. Functionally, catalyzes the release of premature peptidyl moieties from peptidyl-tRNA molecules trapped in stalled 50S ribosomal subunits, and thus maintains levels of free tRNAs and 50S ribosomes. The chain is Peptidyl-tRNA hydrolase from Hydrogenobaculum sp. (strain Y04AAS1).